Here is a 209-residue protein sequence, read N- to C-terminus: Uridine kinase (209 aa).

12–19 contributes to the ATP binding site; that stretch reads GGSGSGKT.

The protein belongs to the uridine kinase family.

The protein localises to the cytoplasm. It catalyses the reaction uridine + ATP = UMP + ADP + H(+). The enzyme catalyses cytidine + ATP = CMP + ADP + H(+). It functions in the pathway pyrimidine metabolism; CTP biosynthesis via salvage pathway; CTP from cytidine: step 1/3. Its pathway is pyrimidine metabolism; UMP biosynthesis via salvage pathway; UMP from uridine: step 1/1. In Listeria welshimeri serovar 6b (strain ATCC 35897 / DSM 20650 / CCUG 15529 / CIP 8149 / NCTC 11857 / SLCC 5334 / V8), this protein is Uridine kinase.